The primary structure comprises 71 residues: Conotoxin Lt11.3 (71 aa).

The signal sequence occupies residues Met-1 to Ala-26. Disulfide bonds link Cys-27-Cys-41, Cys-34-Cys-46, Cys-40-Cys-50, and Cys-45-Cys-54. At Pro-57 the chain carries Proline amide. Residues Thr-61 to Arg-71 constitute a propeptide that is removed on maturation.

The protein belongs to the conotoxin I2 superfamily. In terms of tissue distribution, expressed by the venom duct.

Its subcellular location is the secreted. Its function is as follows. Probable neurotoxin. The polypeptide is Conotoxin Lt11.3 (Conus litteratus (Lettered cone)).